Consider the following 129-residue polypeptide: Succinate dehydrogenase assembly factor 3, mitochondrial (129 aa).

This sequence belongs to the complex I LYR family. SDHAF3 subfamily. As to quaternary structure, interacts with the iron-sulfur protein subunit within the SDH catalytic dimer.

The protein resides in the mitochondrion matrix. Plays an essential role in the assembly of succinate dehydrogenase (SDH), an enzyme complex (also referred to as respiratory complex II) that is a component of both the tricarboxylic acid (TCA) cycle and the mitochondrial electron transport chain, and which couples the oxidation of succinate to fumarate with the reduction of ubiquinone (coenzyme Q) to ubiquinol. Promotes maturation of the iron-sulfur protein subunit of the SDH catalytic dimer, protecting it from the deleterious effects of oxidants. May act together with SDHAF1. The polypeptide is Succinate dehydrogenase assembly factor 3, mitochondrial (Aspergillus fumigatus (strain ATCC MYA-4609 / CBS 101355 / FGSC A1100 / Af293) (Neosartorya fumigata)).